The following is a 90-amino-acid chain: U7-theraphotoxin-Hhn1a 1 (90 aa).

The signal sequence occupies residues 1–19 (MKTAIFTVVLALAVFAVLS). Positions 20 to 50 (FGWEANEKALSEEFTELIHEKEAASETEARE) are excised as a propeptide. 3 disulfides stabilise this stretch: C51–C65, C58–C70, and C64–C81.

Belongs to the neurotoxin 10 (Hwtx-1) family. 13 (Hntx-13) subfamily. Expressed by the venom gland.

It localises to the secreted. Ion channel inhibitor. This Cyriopagopus hainanus (Chinese bird spider) protein is U7-theraphotoxin-Hhn1a 1.